The sequence spans 228 residues: MCHVIVTCRSMLWTLLSIVVAFAELIAFMSADWLIGKARSRGGVEPAGPGGGSPEPYHPTLGIYARCIRNPGVQHFQRDTLCGPYAESFGEIASGFWQATAIFLAVGIFILCMVALVSVFTMCVQSIMKKSIFNVCGLLQGIAGLFLILGLILYPAGWGCQKAIDYCGHYASAYKPGDCSLGWAFYTAIGGTVLTFICAVFSAQAEIATSSDKVQEEIEEGKNLICLL.

4 helical membrane-spanning segments follow: residues 11–31 (MLWT…FMSA), 102–122 (IFLA…VFTM), 132–152 (IFNV…LGLI), and 181–201 (LGWA…CAVF).

The protein belongs to the LHFP family. Expressed in all tissues and cell lines examined except brain and peripheral blood leukocytes.

The protein localises to the membrane. Its function is as follows. Plays a role in female and male fertility. Involved in distal reproductive tract development. This chain is LHFPL tetraspan subfamily member 2 protein, found in Homo sapiens (Human).